Reading from the N-terminus, the 394-residue chain is MLSENTINIVKSTAPLLAETGPKLTAHFYQRMFEHNPELKDIFNMSNQRNGDQREALFNAICAYASNIDNLPALLGAVEKIAHKHSSFLITADQYQIVGSHLLATIDELFSPGQAVLDAWAEAYGVLANVFIQREEQIYQANQSQTGGWRGLREFELVEKQYESAHICSFVFKPVDGGSVVSFKPGQYLGIYINDEQFENQEIRQYSLSSSVRPDCYRISVKREEGGRVSNYLHDHLDVGSKVKLAAPAGDFFLDAAPTAPVVLISAGVGLTPTLSMLESLTEHQAPVTWIHATENGQQHAFKQHVKQLVETHPHFNSLVWYNQPNSDDKIGDDFQFSGWVNLHEIETVLKQADVQVYFCGPVGFMQFIAKQLLEMGVPEQQFHYECFGPHKVV.

The Globin domain maps to Met1–Glu136. His85 is a binding site for heme b. Catalysis depends on charge relay system residues Tyr95 and Glu135. The segment at Gly147–Val394 is reductase. In terms of domain architecture, FAD-binding FR-type spans Arg150–Asp255. Residues Tyr188 and Arg204 to Ser207 each bind FAD. Position 268–273 (Gly268–Pro273) interacts with NADP(+). Cys387–Pro390 is an FAD binding site.

This sequence belongs to the globin family. Two-domain flavohemoproteins subfamily. In the C-terminal section; belongs to the flavoprotein pyridine nucleotide cytochrome reductase family. Heme b is required as a cofactor. Requires FAD as cofactor.

It carries out the reaction 2 nitric oxide + NADPH + 2 O2 = 2 nitrate + NADP(+) + H(+). The catalysed reaction is 2 nitric oxide + NADH + 2 O2 = 2 nitrate + NAD(+) + H(+). Its function is as follows. Is involved in NO detoxification in an aerobic process, termed nitric oxide dioxygenase (NOD) reaction that utilizes O(2) and NAD(P)H to convert NO to nitrate, which protects the bacterium from various noxious nitrogen compounds. Therefore, plays a central role in the inducible response to nitrosative stress. The sequence is that of Flavohemoprotein from Vibrio vulnificus (strain YJ016).